Reading from the N-terminus, the 339-residue chain is Phosphate acyltransferase (339 aa).

This sequence belongs to the PlsX family. In terms of assembly, homodimer. Probably interacts with PlsY.

Its subcellular location is the cytoplasm. The enzyme catalyses a fatty acyl-[ACP] + phosphate = an acyl phosphate + holo-[ACP]. It participates in lipid metabolism; phospholipid metabolism. Its function is as follows. Catalyzes the reversible formation of acyl-phosphate (acyl-PO(4)) from acyl-[acyl-carrier-protein] (acyl-ACP). This enzyme utilizes acyl-ACP as fatty acyl donor, but not acyl-CoA. The sequence is that of Phosphate acyltransferase from Helicobacter pylori (strain J99 / ATCC 700824) (Campylobacter pylori J99).